A 341-amino-acid chain; its full sequence is MDHAGDAMRTDLMTITRYVLNEQSKRPESRGDFTILLSHIVLGCKFVCSAVNKAGLAKLIGLAGETNIQGEEQKKLDVLSNEVFVKALTSSGRTCILVSEEDEEATFIEPSLRGKYCVVFDPLDGSSNIDCGVSIGTIFGIYMVKDFETATLEDVLQPGKNMVAAGYCMYGSSCTLVLSTGSGVNGFTLDPSLGEYILTHPDIKIPNKGKIYSVNEGNAKNWDGPTTKYVEKCKFPTDGSSPKSLRYIGSMVADVHRTLLYGGIFLYPGDKKSPNGKLRVLYEVFPMSFLMEQAGGQAFTGKQRALDLIPTKIHERSPVFLGSYDDVEDIKALYAAQEKTA.

Mg(2+)-binding residues include Glu-71, Glu-100, Asp-121, Leu-123, and Asp-124. Substrate is bound by residues 124–127 (DGSS), Asn-215, Tyr-247, Tyr-267, and Lys-277. Glu-283 serves as a coordination point for Mg(2+).

The protein belongs to the FBPase class 1 family. It depends on Mg(2+) as a cofactor.

The protein resides in the cytoplasm. The catalysed reaction is beta-D-fructose 1,6-bisphosphate + H2O = beta-D-fructose 6-phosphate + phosphate. This is Fructose-1,6-bisphosphatase, cytosolic from Spinacia oleracea (Spinach).